We begin with the raw amino-acid sequence, 408 residues long: MSTIIFGVVMFTLIILALVLVILFAKSKLVPTGDITISINGDPEKAIVTQPGGKLLTALAGAGVFVSSACGGGGSCGQCRVKIKSGGGDILPTELDHISKGEAREGERLACQVAVKADMDLELPEEIFGVKKWECTVISNDNKATFIKELKLAIPDGESVPFRAGGYIQIEAPAHHVKYADFDVPEKYRGDWDKFNLFRYESKVDEPIIRAYSMANYPEEFGIIMLNVRIATPPPNNPNVPPGQMSSYIWSLKAGDKCTISGPFGEFFAKDTDAEMVFIGGGAGMAPMRSHIFDQLKRLKSKRKMSYWYGARSKREMFYVEDFDGLAAENDNFVWHCALSDPQPEDNWTGYTGFIHNVLYENYLKDHEAPEDCEYYMCGPPMMNAAVINMLKNLGVEEENILLDDFGG.

Residues I4–F24 traverse the membrane as a helical segment. Residues G33 to I127 enclose the 2Fe-2S ferredoxin-type domain. [2Fe-2S] cluster is bound by residues C70, C76, C79, and C111. The FAD-binding FR-type domain maps to V130–K270.

Belongs to the NqrF family. In terms of assembly, composed of six subunits; NqrA, NqrB, NqrC, NqrD, NqrE and NqrF. The cofactor is [2Fe-2S] cluster. FAD serves as cofactor.

It localises to the cell inner membrane. The enzyme catalyses a ubiquinone + n Na(+)(in) + NADH + H(+) = a ubiquinol + n Na(+)(out) + NAD(+). Its function is as follows. NQR complex catalyzes the reduction of ubiquinone-1 to ubiquinol by two successive reactions, coupled with the transport of Na(+) ions from the cytoplasm to the periplasm. The first step is catalyzed by NqrF, which accepts electrons from NADH and reduces ubiquinone-1 to ubisemiquinone by a one-electron transfer pathway. The sequence is that of Na(+)-translocating NADH-quinone reductase subunit F from Vibrio cholerae serotype O1 (strain ATCC 39541 / Classical Ogawa 395 / O395).